The sequence spans 611 residues: UvrABC system protein C (611 aa).

The GIY-YIG domain maps to 6–84 (NNPGVYRMFN…IKRLRPRFNV (79 aa)). Residues 194 to 229 (QSVKDHLAAAMQAASADLDFEHAAVYRDRLAALSHV) form the UVR domain.

Belongs to the UvrC family. As to quaternary structure, interacts with UvrB in an incision complex.

Its subcellular location is the cytoplasm. Functionally, the UvrABC repair system catalyzes the recognition and processing of DNA lesions. UvrC both incises the 5' and 3' sides of the lesion. The N-terminal half is responsible for the 3' incision and the C-terminal half is responsible for the 5' incision. The polypeptide is UvrABC system protein C (Brucella abortus (strain 2308)).